The chain runs to 295 residues: Reticulon-like protein 1 (295 aa).

Residues 1 to 50 (MSASAQHSQAQQQQQQKSCNCDLLLWRNPVQTGKYFGGSLLALLILKKVN) lie on the Cytoplasmic side of the membrane. The Reticulon domain occupies 20–220 (NCDLLLWRNP…ISNLVKSKTA (201 aa)). Residues 51–73 (LITFFLKVAYTILFTTGSIEFVS) traverse the membrane as a helical segment. Over 74–142 (KLFLGQGLIT…ALFLLHKFFS (69 aa)) the chain is Lumenal. Residues 143–163 (WFSIWTIVFVADIFTFTLPVI) form a helical membrane-spanning segment. Residues 164–295 (YHSYKHEIDA…LQNELEKNNA (132 aa)) lie on the Cytoplasmic side of the membrane. A phosphothreonine mark is found at Thr186 and Thr219. Residues 219 to 235 (TAPVSSTAGPQTASTSK) show a composition bias toward polar residues. A disordered region spans residues 219–295 (TAPVSSTAGP…LQNELEKNNA (77 aa)). Phosphoserine is present on Ser232. Residues 265 to 295 (STTQEFNVDELSNELKKSTKNLQNELEKNNA) adopt a coiled-coil conformation.

Interacts with POM33.

It is found in the endoplasmic reticulum membrane. This chain is Reticulon-like protein 1 (RTN1), found in Saccharomyces cerevisiae (strain ATCC 204508 / S288c) (Baker's yeast).